The primary structure comprises 333 residues: Extracellular globin (333 aa).

The first 18 residues, 1 to 18 (MHSSIVLAIVLFVAIASA), serve as a signal peptide directing secretion. Globin domains are found at residues 25 to 167 (CMKS…HHGR) and 174 to 318 (CMNS…KHAK). Heme b-binding residues include Q82 and H114. The N-linked (GlcNAc...) asparagine glycan is linked to N216. Heme b-binding residues include Q231 and H263. The tract at residues 314 to 333 (DKHAKAEKDHHEGEHKEEHH) is disordered.

It belongs to the globin family. Homooctamer.

It localises to the secreted. The protein resides in the extracellular space. In Pseudoterranova decipiens (Sealworm), this protein is Extracellular globin.